Reading from the N-terminus, the 234-residue chain is Biotin transport ATP-binding protein BioM (234 aa).

Residues 1-230 enclose the ABC transporter domain; sequence MQAIDIGHVT…YIAAMQALAR (230 aa). Position 35–42 (35–42) interacts with ATP; sequence GRNGAGKS.

It belongs to the ABC transporter superfamily. In terms of assembly, part of a biotin transporter holocomplex composed of BioM, BioN and BioY. BioMN complexes can be readily purified, but not BioMY complexes. Only the BioMNY complex has ATPase activity.

Its subcellular location is the cell inner membrane. Functionally, required for biotin uptake under very low (pM) biotin concentrations but not under higher (nM) concentrations. The polypeptide is Biotin transport ATP-binding protein BioM (bioM) (Rhodobacter capsulatus (strain ATCC BAA-309 / NBRC 16581 / SB1003)).